A 254-amino-acid polypeptide reads, in one-letter code: Ribonuclease HII (254 aa).

In terms of domain architecture, RNase H type-2 spans 70–254 (QAIAGIDEVG…TFEPVKSMLG (185 aa)). Positions 76, 77, and 168 each coordinate a divalent metal cation.

Belongs to the RNase HII family. Mn(2+) serves as cofactor. It depends on Mg(2+) as a cofactor.

Its subcellular location is the cytoplasm. The catalysed reaction is Endonucleolytic cleavage to 5'-phosphomonoester.. Its function is as follows. Endonuclease that specifically degrades the RNA of RNA-DNA hybrids. This chain is Ribonuclease HII, found in Streptococcus gordonii (strain Challis / ATCC 35105 / BCRC 15272 / CH1 / DL1 / V288).